Here is a 240-residue protein sequence, read N- to C-terminus: MQAKIKNKRVLVKFSGEALAGDNQFGIDIHVLDHIAKEIKSLVENAIEVGIVIGGGNIIRGVSAAQGGIIRRTSGDYMGMLATVINAVAMQEALEHIGLDTRVQSAIEIKEICESYIYRKAIRHLEKGRVVIFGAGTGNPFFTTDTAATLRAIEIGSDLIIKATKVDGIYDKDPNKFKDAKKLDTLSYNDALIGDIEVMDDTAISLAKDNKLPIVVCNMFKKGNLLQVIKHQQGVFSMVK.

13–16 (KFSG) serves as a coordination point for ATP. Gly55 contacts UMP. Residues Gly56 and Arg60 each contribute to the ATP site. UMP-binding positions include Asp76 and 137–144 (TGNPFFTT). Residues Thr164, Tyr170, and Asp173 each contribute to the ATP site.

It belongs to the UMP kinase family. As to quaternary structure, homohexamer.

The protein localises to the cytoplasm. It catalyses the reaction UMP + ATP = UDP + ADP. It functions in the pathway pyrimidine metabolism; CTP biosynthesis via de novo pathway; UDP from UMP (UMPK route): step 1/1. With respect to regulation, inhibited by UTP. Its function is as follows. Catalyzes the reversible phosphorylation of UMP to UDP. The sequence is that of Uridylate kinase from Helicobacter pylori (strain HPAG1).